Reading from the N-terminus, the 647-residue chain is Neutral endopeptidase (647 aa).

In terms of domain architecture, Peptidase M13 spans 1–647 (MRRYLAVRGG…LDPEDRITIW (647 aa)). Position 496 (His-496) interacts with Zn(2+). The active site involves Glu-497. Zn(2+) contacts are provided by His-500 and Glu-556. Asp-560 (proton donor) is an active-site residue.

Belongs to the peptidase M13 family. Requires Zn(2+) as cofactor.

The chain is Neutral endopeptidase (pepO) from Lactobacillus helveticus (Lactobacillus suntoryeus).